The primary structure comprises 180 residues: Diphosphoinositol polyphosphate phosphohydrolase 2 (180 aa).

Methionine 1 is modified (N-acetylmethionine). Substrate contacts are provided by residues arginine 10, 18–20 (KKR), and 39–41 (SSR). The 127-residue stretch at 18-144 (KKRAACLCFR…VHAEYLEKLK (127 aa)) folds into the Nudix hydrolase domain. Residues glycine 50 and glutamate 66 each contribute to the Mg(2+) site. A Nudix box motif is present at residues 51 to 72 (GGMEPEEEPGGAAVREVYEEAG). The active-site Proton acceptor is glutamate 69. Glutamate 70 is a binding site for Mg(2+). Substrate is bound by residues 89-91 (RKH), arginine 115, and lysine 133.

This sequence belongs to the Nudix hydrolase family. DIPP subfamily. It depends on Mg(2+) as a cofactor. The cofactor is Mn(2+). Expressed in heart and, at lower level in skeletal muscle, pancreas and kidney.

Its subcellular location is the cytoplasm. The enzyme catalyses diphospho-myo-inositol polyphosphate + H2O = myo-inositol polyphosphate + phosphate.. The catalysed reaction is 5-diphospho-1D-myo-inositol 1,2,3,4,6-pentakisphosphate + H2O = 1D-myo-inositol hexakisphosphate + phosphate + H(+). It carries out the reaction 3,5-bis(diphospho)-1D-myo-inositol 1,2,4,6-tetrakisphosphate + H2O = 3-diphospho-1D-myo-inositol 1,2,4,5,6-pentakisphosphate + phosphate + 2 H(+). It catalyses the reaction 5-diphospho-1D-myo-inositol 1,3,4,6-tetrakisphosphate + H2O = 1D-myo-inositol 1,3,4,5,6-pentakisphosphate + phosphate + H(+). The enzyme catalyses P(1),P(6)-bis(5'-adenosyl) hexaphosphate + H2O = 2 ATP + 2 H(+). The catalysed reaction is P(1),P(5)-bis(5'-adenosyl) pentaphosphate + H2O = ADP + ATP + 2 H(+). It carries out the reaction 5-phospho-alpha-D-ribose 1-diphosphate + H2O = alpha-D-ribose 1,5-bisphosphate + phosphate + H(+). Cleaves the beta-phosphate from diphosphoinositol polyphosphates such as PP-InsP5 (diphosphoinositol pentakisphosphate), PP-InsP4 (diphosphoinositol tetrakisphosphate) and [PP]2-InsP4 (bisdiphosphoinositol tetrakisphosphate), suggesting that it may play a role in signal transduction. Diadenosine polyphosphates, particularly Ap6A (P(1),P(6)-bis(5a-adenosyl) hexaphosphate) and Ap5A (P(1),P(5)-bis(5'-adenosyl) pentaphosphate) are downstream effectors of a signaling cascade that regulates cardiac KATP channels, can also be substrates, although with lower preference than the diphosphoinositol polyphosphates. Can also catalyze the hydrolysis of 5-phosphoribose 1-diphosphate, generating the glycolytic activator ribose 1,5-bisphosphate. Does not play a role in U8 snoRNA decapping activity. Binds U8 snoRNA. This is Diphosphoinositol polyphosphate phosphohydrolase 2 from Homo sapiens (Human).